The primary structure comprises 558 residues: Ceramide kinase-like protein (558 aa).

The segment at 1–36 (MPWRRRRNRVSALEGGREEEAPPEAAAVPPALLTSP) is disordered. 2 consecutive short sequence motifs (nuclear localization signal) follow at residues 2–9 (PWRRRRNR) and 102–106 (KLKRR). In terms of domain architecture, DAGKc spans 164 to 339 (NRPKSLKILL…VDVCTFSTAG (176 aa)).

Post-translationally, phosphorylated on serine residues. In terms of tissue distribution, isoform 1 and isoform 2 are expressed in adult retina, liver and pancreas as well as in fetal brain, lung and kidney. Isoform 3 is expressed in adult retina as well as in fetal lung and liver. Isoform 4 is expressed in adult retina, lung and kidney as well as in fetal lung and liver. Moderately expressed in retina, kidney, lung, testis, trachea, and pancreas. Weakly expressed in brain, placenta and liver.

It is found in the cytoplasm. The protein localises to the nucleus. It localises to the nucleolus. Its subcellular location is the golgi apparatus. The protein resides in the trans-Golgi network. It is found in the endoplasmic reticulum. In terms of biological role, has no detectable ceramide-kinase activity. Overexpression of CERKL protects cells from apoptosis in oxidative stress conditions. This chain is Ceramide kinase-like protein (CERKL), found in Homo sapiens (Human).